Here is a 95-residue protein sequence, read N- to C-terminus: MKWVTGLLVVLLLGLQYKLWIGEGSVAEVWQLRQTLEAQRAENEELRYRNAALDAEVTDLKTGLDAIEERARRELGMIRRDETFFQVVGRPGETP.

Residues 1-3 are Cytoplasmic-facing; it reads MKW. A helical membrane pass occupies residues 4-21; that stretch reads VTGLLVVLLLGLQYKLWI. Residues 22–95 are Periplasmic-facing; the sequence is GEGSVAEVWQ…QVVGRPGETP (74 aa). Positions 26–73 form a coiled coil; it reads VAEVWQLRQTLEAQRAENEELRYRNAALDAEVTDLKTGLDAIEERARR.

The protein belongs to the FtsB family. In terms of assembly, part of a complex composed of FtsB, FtsL and FtsQ.

The protein resides in the cell inner membrane. Functionally, essential cell division protein. May link together the upstream cell division proteins, which are predominantly cytoplasmic, with the downstream cell division proteins, which are predominantly periplasmic. This chain is Cell division protein FtsB, found in Thioalkalivibrio sulfidiphilus (strain HL-EbGR7).